The sequence spans 157 residues: 6,7-dimethyl-8-ribityllumazine synthase (157 aa).

Residues Phe23, 57–59 (AFE), and 81–83 (AVI) contribute to the 5-amino-6-(D-ribitylamino)uracil site. 86–87 (AT) contacts (2S)-2-hydroxy-3-oxobutyl phosphate. His89 (proton donor) is an active-site residue. Residue Phe114 coordinates 5-amino-6-(D-ribitylamino)uracil. Arg128 is a binding site for (2S)-2-hydroxy-3-oxobutyl phosphate.

The protein belongs to the DMRL synthase family.

The enzyme catalyses (2S)-2-hydroxy-3-oxobutyl phosphate + 5-amino-6-(D-ribitylamino)uracil = 6,7-dimethyl-8-(1-D-ribityl)lumazine + phosphate + 2 H2O + H(+). It participates in cofactor biosynthesis; riboflavin biosynthesis; riboflavin from 2-hydroxy-3-oxobutyl phosphate and 5-amino-6-(D-ribitylamino)uracil: step 1/2. In terms of biological role, catalyzes the formation of 6,7-dimethyl-8-ribityllumazine by condensation of 5-amino-6-(D-ribitylamino)uracil with 3,4-dihydroxy-2-butanone 4-phosphate. This is the penultimate step in the biosynthesis of riboflavin. In Desulforapulum autotrophicum (strain ATCC 43914 / DSM 3382 / VKM B-1955 / HRM2) (Desulfobacterium autotrophicum), this protein is 6,7-dimethyl-8-ribityllumazine synthase.